Here is a 354-residue protein sequence, read N- to C-terminus: Protein PHLOEM PROTEIN 2-LIKE A8 (354 aa).

The 168-residue stretch at threonine 12–leucine 179 folds into the TIR domain. The active site involves glutamate 86.

It carries out the reaction NAD(+) + H2O = ADP-D-ribose + nicotinamide + H(+). This Arabidopsis thaliana (Mouse-ear cress) protein is Protein PHLOEM PROTEIN 2-LIKE A8 (PP2A8).